We begin with the raw amino-acid sequence, 92 residues long: Elongation factor 1-beta (92 aa).

Belongs to the EF-1-beta/EF-1-delta family.

Functionally, promotes the exchange of GDP for GTP in EF-1-alpha/GDP, thus allowing the regeneration of EF-1-alpha/GTP that could then be used to form the ternary complex EF-1-alpha/GTP/AAtRNA. The protein is Elongation factor 1-beta of Korarchaeum cryptofilum (strain OPF8).